The primary structure comprises 471 residues: MSVLKEYRTVSEVVGPLMIVDQVAGVHYNELVDITLHNGERRKGQVLEVQGDKAMVQLFEGSTGINLAKTKVRFTGHPLELAVSEDMVGRIFDGMGHPIDGGPELIPEKYLDIDGQAINPVARDYPDEFIQTGISAIDHLNTLVRGQKLPVFSGSGLPHNELAAQIARQATVLNSDDNFAVVFAAMGITFEEAEFFMNDLRETGAIDRSVLFINLANDPAIERIATPRIALTTAEYLAYEKGMHVLVIMTDMTNYCEALREVSAARREVPGRRGYPGYLYTNLSTLYERAGRLIGKKGSVTQIPILTMPEDDITHPIPDLTGYITEGQIILSQELYKNGFRPPINVLPSLSRLKDKGSGEGKTRQDHAATMNQLFAAYAQGKQAKELAVVLGESALSETDKLYVAFTNRFEEEYINQGLYTNRSIEESLDLGWELLSILPRTELKRIKDDMLDRYLPKADTTMTKVFVAND.

The protein belongs to the ATPase alpha/beta chains family.

Functionally, produces ATP from ADP in the presence of a proton gradient across the membrane. The V-type beta chain is a regulatory subunit. This is V-type ATP synthase beta chain from Streptococcus pyogenes serotype M28 (strain MGAS6180).